We begin with the raw amino-acid sequence, 458 residues long: tRNA modification GTPase MnmE (458 aa).

Residues R22, E85, and R124 each contribute to the (6S)-5-formyl-5,6,7,8-tetrahydrofolate site. In terms of domain architecture, TrmE-type G spans 220–379; the sequence is GLATAIIGRP…LEEAISRLFF (160 aa). N230 serves as a coordination point for K(+). Residues 230-235, 249-255, and 274-277 contribute to the GTP site; these read NVGKSS, TDIPGTT, and DTAG. S234 contacts Mg(2+). K(+)-binding residues include T249, I251, and T254. Residue T255 coordinates Mg(2+). Residue K458 participates in (6S)-5-formyl-5,6,7,8-tetrahydrofolate binding.

This sequence belongs to the TRAFAC class TrmE-Era-EngA-EngB-Septin-like GTPase superfamily. TrmE GTPase family. As to quaternary structure, homodimer. Heterotetramer of two MnmE and two MnmG subunits. The cofactor is K(+).

It is found in the cytoplasm. Functionally, exhibits a very high intrinsic GTPase hydrolysis rate. Involved in the addition of a carboxymethylaminomethyl (cmnm) group at the wobble position (U34) of certain tRNAs, forming tRNA-cmnm(5)s(2)U34. The polypeptide is tRNA modification GTPase MnmE (Shouchella clausii (strain KSM-K16) (Alkalihalobacillus clausii)).